The primary structure comprises 434 residues: Trigger factor (434 aa).

Residues 163–248 (GDTAVIDFAG…VHDIKRKELP (86 aa)) form the PPIase FKBP-type domain.

It belongs to the FKBP-type PPIase family. Tig subfamily.

It localises to the cytoplasm. The catalysed reaction is [protein]-peptidylproline (omega=180) = [protein]-peptidylproline (omega=0). Functionally, involved in protein export. Acts as a chaperone by maintaining the newly synthesized protein in an open conformation. Functions as a peptidyl-prolyl cis-trans isomerase. This chain is Trigger factor, found in Shouchella clausii (strain KSM-K16) (Alkalihalobacillus clausii).